The primary structure comprises 250 residues: Proteasome subunit alpha type-2 (250 aa).

Lysine 108 participates in a covalent cross-link: Glycyl lysine isopeptide (Lys-Gly) (interchain with G-Cter in ubiquitin).

Belongs to the peptidase T1A family. As to quaternary structure, the 26S proteasome consists of a 20S proteasome core and two 19S regulatory subunits. The 20S proteasome core is composed of 28 subunits that are arranged in four stacked rings, resulting in a barrel-shaped structure. The two end rings are each formed by seven alpha subunits, and the two central rings are each formed by seven beta subunits. The catalytic chamber with the active sites is on the inside of the barrel.

It localises to the cytoplasm. The protein resides in the nucleus. The proteasome degrades poly-ubiquitinated proteins in the cytoplasm and in the nucleus. It is essential for the regulated turnover of proteins and for the removal of misfolded proteins. The proteasome is a multicatalytic proteinase complex that is characterized by its ability to cleave peptides with Arg, Phe, Tyr, Leu, and Glu adjacent to the leaving group at neutral or slightly basic pH. It has an ATP-dependent proteolytic activity. The sequence is that of Proteasome subunit alpha type-2 (PRE8) from Saccharomyces cerevisiae (strain ATCC 204508 / S288c) (Baker's yeast).